The primary structure comprises 220 residues: Exodeoxyribonuclease 10 (220 aa).

It depends on Mg(2+) as a cofactor.

Capable of degrading both single-strand and double-strand DNA with 3' to 5' polarity. Has higher affinity for ssDNA ends than for dsDNA. The polypeptide is Exodeoxyribonuclease 10 (exoX) (Escherichia coli O6:H1 (strain CFT073 / ATCC 700928 / UPEC)).